The following is a 445-amino-acid chain: MGSQELQRKLGFWAVLAIAVGTTVGSGIFVSVGEVAKAAGTPWLTVLAFVIGGLIVIPQMCVYAELSTAYPENGADYVYLKNAGSRPLAFLSGWASFWANDAPSLSIMALAIVSNLGFLTPIDPLLGKFIAAGLIIAFMLLHLRSVEGGAAFQTLITIAKIIPFTIVIGLGIFWFKAENFAAPTTTAIGATGSFMALLAGISATSWSYTGMASICYMTGEIKNPGKTMPRALIGSCLLVLVLYTLLALVISGLMPFDKLANSETPISDALTWIPALGSTAGIFVAITAMIVILGSLSSCVMYQPRLEYAMAKDNLFFKCFGHVHPKYNTPDVSIILQGALGIFFIFVSDLTSLLGYFTLVMCFKNTLTFGSIIWCRKRDDYKPLWRTPAFGLMTTLAIASSLILVASTFVWAPIPGLICAVIVIATGLPAYAFWAKRSRQLNALS.

12 helical membrane-spanning segments follow: residues 10–30, 38–58, 93–113, 121–141, 155–175, 181–201, 236–256, 273–293, 334–354, 355–375, 389–410, and 417–435; these read LGFW…GIFV, AAGT…IVIP, GWAS…LAIV, PIDP…FMLL, LITI…IFWF, AAPT…LAGI, CLLV…LMPF, IPAL…IVIL, IILQ…TSLL, GYFT…IIWC, AFGL…STFV, and LICA…AFWA.

This sequence belongs to the amino acid-polyamine-organocation (APC) superfamily.

It localises to the cell inner membrane. It carries out the reaction N(6)-(D-fructosyl)-L-lysine(in) = N(6)-(D-fructosyl)-L-lysine(out). The catalysed reaction is N(6)-(D-psicosyl)-L-lysine(in) = N(6)-(D-psicosyl)-L-lysine(out). It participates in carbohydrate metabolism; fructoselysine degradation. Functionally, is likely involved in the transport of fructoselysine and psicoselysine to the cytoplasm, where they are degraded. The protein is Probable fructoselysine/psicoselysine transporter FrlA of Escherichia coli (strain K12).